The primary structure comprises 159 residues: 3-dehydroquinate dehydratase (159 aa).

Tyr22 functions as the Proton acceptor in the catalytic mechanism. Residues Asn73, His79, and Asp86 each coordinate substrate. His99 serves as the catalytic Proton donor. Substrate-binding positions include 100 to 101 and Arg110; that span reads IS.

It belongs to the type-II 3-dehydroquinase family. In terms of assembly, homododecamer.

The enzyme catalyses 3-dehydroquinate = 3-dehydroshikimate + H2O. It participates in metabolic intermediate biosynthesis; chorismate biosynthesis; chorismate from D-erythrose 4-phosphate and phosphoenolpyruvate: step 3/7. In terms of biological role, catalyzes a trans-dehydration via an enolate intermediate. This Campylobacter jejuni subsp. jejuni serotype O:6 (strain 81116 / NCTC 11828) protein is 3-dehydroquinate dehydratase.